The primary structure comprises 559 residues: Glucose-6-phosphate isomerase (559 aa).

Glu352 (proton donor) is an active-site residue. Residues His383 and Lys511 contribute to the active site.

This sequence belongs to the GPI family.

It is found in the cytoplasm. The enzyme catalyses alpha-D-glucose 6-phosphate = beta-D-fructose 6-phosphate. The protein operates within carbohydrate biosynthesis; gluconeogenesis. Its pathway is carbohydrate degradation; glycolysis; D-glyceraldehyde 3-phosphate and glycerone phosphate from D-glucose: step 2/4. In terms of biological role, catalyzes the reversible isomerization of glucose-6-phosphate to fructose-6-phosphate. This chain is Glucose-6-phosphate isomerase, found in Chlorobaculum tepidum (strain ATCC 49652 / DSM 12025 / NBRC 103806 / TLS) (Chlorobium tepidum).